Here is a 210-residue protein sequence, read N- to C-terminus: Large ribosomal subunit protein uL4 (210 aa).

The segment at 41-79 is disordered; that stretch reads MANARQGTASTKTRAEVRGGGRKPWRQKGTGRARAGSNR. A compositionally biased stretch (polar residues) spans 43–52; that stretch reads NARQGTASTK. A compositionally biased stretch (basic residues) spans 60-71; sequence GGRKPWRQKGTG.

The protein belongs to the universal ribosomal protein uL4 family. As to quaternary structure, part of the 50S ribosomal subunit.

One of the primary rRNA binding proteins, this protein initially binds near the 5'-end of the 23S rRNA. It is important during the early stages of 50S assembly. It makes multiple contacts with different domains of the 23S rRNA in the assembled 50S subunit and ribosome. Its function is as follows. Forms part of the polypeptide exit tunnel. This chain is Large ribosomal subunit protein uL4, found in Cyanothece sp. (strain PCC 7425 / ATCC 29141).